Reading from the N-terminus, the 340-residue chain is Erlin-2 (340 aa).

Residues 1–3 are Cytoplasmic-facing; it reads MAQ. The helical transmembrane segment at 4-24 threads the bilayer; the sequence is LGAVVAVASSFFCASLFSAVH. Residues 25–340 lie on the Lumenal side of the membrane; sequence KIEEGHIGVY…EPLEAPTKEN (316 aa). Asn-106 carries an N-linked (GlcNAc...) asparagine glycan. The tract at residues 177–309 is interaction with ERLIN1; it reads EAIRRNYELM…DIPNMFMDSA (133 aa). The residue at position 267 (Lys-267) is an N6-acetyllysine.

The protein belongs to the band 7/mec-2 family. As to quaternary structure, forms a heteromeric complex with ERLIN1. In complex with ERLIN1, interacts with RNF170. Interacts with activated ITPR1, independently of the degree of ITPR1 polyubiquitination. Interacts with SCAP, INSIG1, SREBF1 and SREBF2 under cholesterol sufficiency conditions; indicative for an association with the SCAP-SREBP-INSIG complex. Probably part of an AMFR/gp78 and INSIG1-containing ubiquitin ligase complex involved in ERAD of HMGCR. Interacts with TMUB1; TMUB1 bridges the association with AMFR. Interacts with SYVN1 and RNF139. Interacts with TMEM259. Interacts with TMEM41B. In terms of processing, deubiquitinated by USP25; leading to stabilization.

It is found in the endoplasmic reticulum membrane. Functionally, component of the ERLIN1/ERLIN2 complex which mediates the endoplasmic reticulum-associated degradation (ERAD) of inositol 1,4,5-trisphosphate receptors (IP3Rs) such as ITPR1. Promotes sterol-accelerated ERAD of HMGCR probably implicating an AMFR/gp78-containing ubiquitin ligase complex. Involved in regulation of cellular cholesterol homeostasis by regulation the SREBP signaling pathway. May promote ER retention of the SCAP-SREBF complex. The sequence is that of Erlin-2 (Erlin2) from Mus musculus (Mouse).